A 380-amino-acid polypeptide reads, in one-letter code: Queuine tRNA-ribosyltransferase (380 aa).

Asp-96 functions as the Proton acceptor in the catalytic mechanism. Substrate is bound by residues 96-100 (DSGGF), Asp-150, Gln-193, and Gly-220. The RNA binding stretch occupies residues 251–257 (GVGAPDS). Asp-270 functions as the Nucleophile in the catalytic mechanism. The RNA binding; important for wobble base 34 recognition stretch occupies residues 275 to 279 (TRIAR). Zn(2+) is bound by residues Cys-308, Cys-310, Cys-313, and His-339.

It belongs to the queuine tRNA-ribosyltransferase family. Homodimer. Within each dimer, one monomer is responsible for RNA recognition and catalysis, while the other monomer binds to the replacement base PreQ1. It depends on Zn(2+) as a cofactor.

It catalyses the reaction 7-aminomethyl-7-carbaguanine + guanosine(34) in tRNA = 7-aminomethyl-7-carbaguanosine(34) in tRNA + guanine. Its pathway is tRNA modification; tRNA-queuosine biosynthesis. Its function is as follows. Catalyzes the base-exchange of a guanine (G) residue with the queuine precursor 7-aminomethyl-7-deazaguanine (PreQ1) at position 34 (anticodon wobble position) in tRNAs with GU(N) anticodons (tRNA-Asp, -Asn, -His and -Tyr). Catalysis occurs through a double-displacement mechanism. The nucleophile active site attacks the C1' of nucleotide 34 to detach the guanine base from the RNA, forming a covalent enzyme-RNA intermediate. The proton acceptor active site deprotonates the incoming PreQ1, allowing a nucleophilic attack on the C1' of the ribose to form the product. After dissociation, two additional enzymatic reactions on the tRNA convert PreQ1 to queuine (Q), resulting in the hypermodified nucleoside queuosine (7-(((4,5-cis-dihydroxy-2-cyclopenten-1-yl)amino)methyl)-7-deazaguanosine). The protein is Queuine tRNA-ribosyltransferase of Streptococcus thermophilus (strain ATCC BAA-491 / LMD-9).